The sequence spans 424 residues: Serine--tRNA ligase (424 aa).

L-serine is bound at residue 231–233 (TAE). ATP is bound at residue 262–264 (RSE). Glu285 is an L-serine binding site. An ATP-binding site is contributed by 349–352 (EISS). L-serine is bound at residue Ser385.

The protein belongs to the class-II aminoacyl-tRNA synthetase family. Type-1 seryl-tRNA synthetase subfamily. Homodimer. The tRNA molecule binds across the dimer.

It localises to the cytoplasm. It catalyses the reaction tRNA(Ser) + L-serine + ATP = L-seryl-tRNA(Ser) + AMP + diphosphate + H(+). The catalysed reaction is tRNA(Sec) + L-serine + ATP = L-seryl-tRNA(Sec) + AMP + diphosphate + H(+). It functions in the pathway aminoacyl-tRNA biosynthesis; selenocysteinyl-tRNA(Sec) biosynthesis; L-seryl-tRNA(Sec) from L-serine and tRNA(Sec): step 1/1. Functionally, catalyzes the attachment of serine to tRNA(Ser). Is also able to aminoacylate tRNA(Sec) with serine, to form the misacylated tRNA L-seryl-tRNA(Sec), which will be further converted into selenocysteinyl-tRNA(Sec). The sequence is that of Serine--tRNA ligase from Bacillus pumilus (strain SAFR-032).